A 570-amino-acid polypeptide reads, in one-letter code: MESVTTTIQCMGIKDSCNKKKIFQGGKSKIIEFQVKYENSDEVLNFQTTQSAINKLISELKKEIYSINLPISNYSVTSSSALQDINLLCQCISSTPKIQRSLSFVNFIETENNLTVSSTFIFDFIKNSDISGVLLKTKNNNKRTKKERLCVIKYSRVLYYFSETGGGSSTDINSTEVKKKRCKGLKFLDDCKITEKGENYFQLKTSNNETYVFTTPTNDECDRWVTTINNCIDYITKSTYRVSGQVQGTVVKSRNLAAKDLNGKSDPFVIIKAEQQQHRTQTIYKSLNPQFNEAFHFDITKHQGYVYFFVWDEDKFKTADFMGEVAVPLSLLPPNGSEISLWLPLSPRNSKDKVSGDILIKIRYFFSPDQIEVSPTSIYGNSLEAIVKNRPEICKNQVPNILYQFIEFFEQHLNEEGLFRICGNSTEIKFIKNQVNTDTQITFNPSSVHAYAGAFKLFFRELPEPLFTFNQYDNLINLAKKSTELQPLIEIIKTFPICHLNVLKLLLPFFGKIAANSKSNLMNHSNLSIVFGPSFLRVKDESHVNLMEMILVNDIAKFVFENSQQILKSI.

Residues 127-233 enclose the PH domain; sequence NSDISGVLLK…WVTTINNCID (107 aa). The 120-residue stretch at 224-343 folds into the C2 domain; the sequence is WVTTINNCID…PNGSEISLWL (120 aa). Positions 260, 266, 312, 314, and 320 each coordinate Ca(2+). The Rho-GAP domain occupies 381 to 567; sequence NSLEAIVKNR…FVFENSQQIL (187 aa).

It depends on Ca(2+) as a cofactor.

The protein localises to the cytoplasm. Its function is as follows. Rho GTPase-activating protein involved in the signal transduction pathway. This is Rho GTPase-activating protein gacEE (gacEE) from Dictyostelium discoideum (Social amoeba).